Here is a 366-residue protein sequence, read N- to C-terminus: NADH-quinone oxidoreductase subunit D (366 aa).

It belongs to the complex I 49 kDa subunit family. In terms of assembly, NDH-1 is composed of 14 different subunits. Subunits NuoB, C, D, E, F, and G constitute the peripheral sector of the complex.

It is found in the cell membrane. It carries out the reaction a quinone + NADH + 5 H(+)(in) = a quinol + NAD(+) + 4 H(+)(out). Functionally, NDH-1 shuttles electrons from NADH, via FMN and iron-sulfur (Fe-S) centers, to quinones in the respiratory chain. The immediate electron acceptor for the enzyme in this species is believed to be a menaquinone. Couples the redox reaction to proton translocation (for every two electrons transferred, four hydrogen ions are translocated across the cytoplasmic membrane), and thus conserves the redox energy in a proton gradient. The polypeptide is NADH-quinone oxidoreductase subunit D (Bacillus cereus (strain ATCC 10987 / NRS 248)).